The primary structure comprises 419 residues: UDP-N-acetylglucosamine 1-carboxyvinyltransferase (419 aa).

22-23 lines the phosphoenolpyruvate pocket; the sequence is KN. R91 lines the UDP-N-acetyl-alpha-D-glucosamine pocket. C115 acts as the Proton donor in catalysis. C115 bears the 2-(S-cysteinyl)pyruvic acid O-phosphothioketal mark. UDP-N-acetyl-alpha-D-glucosamine-binding positions include 120 to 124, 160 to 163, D305, and V327; these read RPVDL and KVSV.

The protein belongs to the EPSP synthase family. MurA subfamily.

The protein localises to the cytoplasm. It catalyses the reaction phosphoenolpyruvate + UDP-N-acetyl-alpha-D-glucosamine = UDP-N-acetyl-3-O-(1-carboxyvinyl)-alpha-D-glucosamine + phosphate. The protein operates within cell wall biogenesis; peptidoglycan biosynthesis. Cell wall formation. Adds enolpyruvyl to UDP-N-acetylglucosamine. The protein is UDP-N-acetylglucosamine 1-carboxyvinyltransferase of Shigella dysenteriae serotype 1 (strain Sd197).